The following is a 553-amino-acid chain: Hydroxylamine reductase (553 aa).

[2Fe-2S] cluster contacts are provided by cysteine 3, cysteine 6, cysteine 18, and cysteine 25. Hybrid [4Fe-2O-2S] cluster contacts are provided by histidine 252, glutamate 276, cysteine 320, cysteine 408, cysteine 436, cysteine 461, glutamate 495, and lysine 497. At cysteine 408 the chain carries Cysteine persulfide.

It belongs to the HCP family. It depends on [2Fe-2S] cluster as a cofactor. The cofactor is hybrid [4Fe-2O-2S] cluster.

It is found in the cytoplasm. The enzyme catalyses A + NH4(+) + H2O = hydroxylamine + AH2 + H(+). Its function is as follows. Catalyzes the reduction of hydroxylamine to form NH(3) and H(2)O. The chain is Hydroxylamine reductase from Aliivibrio fischeri (strain ATCC 700601 / ES114) (Vibrio fischeri).